Reading from the N-terminus, the 698-residue chain is MARKTPIERYRNIGISAHIDAGKTTTTERILFYTGVNHKIGEVHDGAATMDWMEQEQERGITITSAATTCFWKGMEMSFPEHRFNIIDTPGHVDFTIEVERSMRVLDGACMVYCAVGGVQPQSETVWRQATKYKVPRLAFVNKMDRQGANFFKVVEQMKLRLKANPVPIVIPIGAEENFVGVVDLVRMKAIYWDEASQGMKFDYREIPGELQATAEEWREKMLEAAAEASEELMNEYLENGDLSHEKIVAGLRQRTIACEIQPMLCGTAFKNKGVQRMLDAVIELLPSPVDIPPVAGIDDYEKPVERRADDSEKFAALAFKLMTDPFVGQLTFVRVYSGVLKSGETVLNSVKGKKERIGRILQMHANERQEIKEVLAGDIAACVGLKEVTTGETLCDPSAPIILERMVFPEPVIHVAVEPKTKADQEKMGIALGRLAAEDPSFRVRTDEESGQTIISGMGELHLEILVDRMKREFNVEATVGAPQVAYREAIRKPVEQEGKFVKQSGGRGQFGHVWIKLEPNETGKGYEFIDAIKGGVVPREYIPAVDKGLQETLPNGVLAGFPVVDVKVTLFDGSYHDVDSNENAFKMAASMAFKDAMRKASPVLLEPMMAVVVETPEDYMGNVMGDLSGRRGIVQGMDDLPGGMKEVKAEVPLAEMFGYATQLRSLTQGRATYSMEFKHYSEAPKSVAEAVINNRK.

Positions 8 to 290 constitute a tr-type G domain; the sequence is ERYRNIGISA…AVIELLPSPV (283 aa). GTP contacts are provided by residues 17–24, 88–92, and 142–145; these read AHIDAGKT, DTPGH, and NKMD.

The protein belongs to the TRAFAC class translation factor GTPase superfamily. Classic translation factor GTPase family. EF-G/EF-2 subfamily.

Its subcellular location is the cytoplasm. Functionally, catalyzes the GTP-dependent ribosomal translocation step during translation elongation. During this step, the ribosome changes from the pre-translocational (PRE) to the post-translocational (POST) state as the newly formed A-site-bound peptidyl-tRNA and P-site-bound deacylated tRNA move to the P and E sites, respectively. Catalyzes the coordinated movement of the two tRNA molecules, the mRNA and conformational changes in the ribosome. The protein is Elongation factor G of Aromatoleum aromaticum (strain DSM 19018 / LMG 30748 / EbN1) (Azoarcus sp. (strain EbN1)).